The chain runs to 407 residues: Imidazolonepropionase (407 aa).

Fe(3+) is bound by residues His74 and His76. Positions 74 and 76 each coordinate Zn(2+). 4-imidazolone-5-propanoate is bound by residues Arg83, Tyr146, and His179. N-formimidoyl-L-glutamate is bound at residue Tyr146. A Fe(3+)-binding site is contributed by His244. Zn(2+) is bound at residue His244. Position 247 (Gln247) interacts with 4-imidazolone-5-propanoate. Asp319 contacts Fe(3+). Asp319 provides a ligand contact to Zn(2+). The N-formimidoyl-L-glutamate site is built by Asn321 and Gly323. A 4-imidazolone-5-propanoate-binding site is contributed by Thr324.

Belongs to the metallo-dependent hydrolases superfamily. HutI family. Zn(2+) is required as a cofactor. Fe(3+) serves as cofactor.

It localises to the cytoplasm. It carries out the reaction 4-imidazolone-5-propanoate + H2O = N-formimidoyl-L-glutamate. The protein operates within amino-acid degradation; L-histidine degradation into L-glutamate; N-formimidoyl-L-glutamate from L-histidine: step 3/3. Its function is as follows. Catalyzes the hydrolytic cleavage of the carbon-nitrogen bond in imidazolone-5-propanoate to yield N-formimidoyl-L-glutamate. It is the third step in the universal histidine degradation pathway. This chain is Imidazolonepropionase, found in Salmonella agona (strain SL483).